The following is a 650-amino-acid chain: Threonine--tRNA ligase (650 aa).

The TGS domain occupies 1 to 61 (MIKITFPDGA…DEDGTLEIVM (61 aa)). A catalytic region spans residues 242–540 (DHRKLGKELD…LIETYKGAFP (299 aa)). Cysteine 336, histidine 387, and histidine 517 together coordinate Zn(2+).

This sequence belongs to the class-II aminoacyl-tRNA synthetase family. In terms of assembly, homodimer. Zn(2+) is required as a cofactor.

The protein localises to the cytoplasm. It catalyses the reaction tRNA(Thr) + L-threonine + ATP = L-threonyl-tRNA(Thr) + AMP + diphosphate + H(+). Catalyzes the attachment of threonine to tRNA(Thr) in a two-step reaction: L-threonine is first activated by ATP to form Thr-AMP and then transferred to the acceptor end of tRNA(Thr). Also edits incorrectly charged L-seryl-tRNA(Thr). This is Threonine--tRNA ligase from Streptococcus suis (strain 98HAH33).